The sequence spans 370 residues: ABSCISIC ACID-INSENSITIVE 5-like protein 8 (370 aa).

A phosphoserine mark is found at serine 25, serine 44, and serine 69. The interval 56-77 (SAEETQEGSQRQGSTTLPPTLS) is disordered. Positions 62–77 (EGSQRQGSTTLPPTLS) are enriched in polar residues. Phosphothreonine is present on threonine 111. Positions 260-278 (ESSLLSPSPYISNGSTSTR) are enriched in polar residues. The disordered stretch occupies residues 260-281 (ESSLLSPSPYISNGSTSTRGGK). Residues 293–356 (VDKKLRRKIK…MEPGMISLHE (64 aa)) form the bZIP domain. The tract at residues 295 to 314 (KKLRRKIKNRESAARSRARK) is basic motif. Residues 328-342 (LKKDYEELLKQHVEL) are leucine-zipper. The interval 349–370 (PGMISLHERPERKLRRTKSDIK) is disordered. The span at 354–370 (LHERPERKLRRTKSDIK) shows a compositional bias: basic and acidic residues.

The protein belongs to the bZIP family. ABI5 subfamily. DNA-binding heterodimer.

The protein localises to the nucleus. Functionally, could participate in abscisic acid-regulated gene expression. This Arabidopsis thaliana (Mouse-ear cress) protein is ABSCISIC ACID-INSENSITIVE 5-like protein 8 (BZIP15).